A 353-amino-acid polypeptide reads, in one-letter code: Fasciclin-like arabinogalactan protein 21 (353 aa).

The first 28 residues, 1 to 28 (MGCCSSDCFVYFILSIALAFMAISTTLR), serve as a signal peptide directing secretion. Asparagine 51, asparagine 81, asparagine 94, asparagine 200, asparagine 249, and asparagine 315 each carry an N-linked (GlcNAc...) asparagine glycan. One can recognise an FAS1 1 domain in the interval 83–181 (TLFAIEDASF…HGVIGPFSPL (99 aa)). In terms of domain architecture, FAS1 2 spans 254-352 (TILATPNLVS…GISHTLEIPH (99 aa)).

Belongs to the fasciclin-like AGP family.

It localises to the secreted. In terms of biological role, may be a cell surface adhesion protein. This Arabidopsis thaliana (Mouse-ear cress) protein is Fasciclin-like arabinogalactan protein 21 (FLA21).